The sequence spans 1362 residues: ATP-dependent RNA helicase dhx29 (1362 aa).

The segment covering 1 to 10 has biased composition (basic residues); it reads MGGKNKKNRH. The interval 1–76 is disordered; sequence MGGKNKKNRH…FASSSDSGVS (76 aa). Residues 18 to 27 show a composition bias toward low complexity; that stretch reads GATAAANRPR. The span at 28–41 shows a compositional bias: basic and acidic residues; sequence AAAEPRPGGEDAAK. Low complexity predominate over residues 66–76; the sequence is SFASSSDSGVS. Positions 89 to 109 form a coiled coil; it reads EAKLEKRIISLINEHKKLNSN. Disordered stretches follow at residues 182 to 215 and 229 to 257; these read QRAR…LKGN and EQGS…DPNE. Over residues 231-242 the composition is skewed to acidic residues; it reads GSDDDDDDDDVK. The span at 243–257 shows a compositional bias: basic and acidic residues; sequence EEEKETTLEKFDPNE. Residues 285 to 305 are a coiled coil; that stretch reads QKEAQERIRGYQQEMKSLEDH. The tract at residues 317–336 is disordered; the sequence is VKSESKQPKPALPPSEDEPL. The Helicase ATP-binding domain maps to 576-749; the sequence is LETLKRHRVI…FTHCPIIRIS (174 aa). Residue 589 to 596 participates in ATP binding; it reads GETGSGKS. Positions 696 to 699 match the DEAH box motif; sequence DEVH. The 170-residue stretch at 852-1021 folds into the Helicase C-terminal domain; it reads DISPEYRNVE…ELCLHIMKCD (170 aa).

Belongs to the DEAD box helicase family. DEAH subfamily. As to quaternary structure, part of the 43S pre-initiation complex (PIC).

It is found in the cytoplasm. The catalysed reaction is ATP + H2O = ADP + phosphate + H(+). Its function is as follows. ATP-binding RNA helicase involved in translation initiation. Part of the 43S pre-initiation complex that is required for efficient initiation on mRNAs of higher eukaryotes with structured 5'-UTRs by promoting efficient NTPase-dependent 48S complex formation. Specifically binds to the 40S ribosome near the mRNA entrance. Does not possess a processive helicase activity. This chain is ATP-dependent RNA helicase dhx29, found in Xenopus laevis (African clawed frog).